We begin with the raw amino-acid sequence, 132 residues long: Small ribosomal subunit protein uS8 (132 aa).

Belongs to the universal ribosomal protein uS8 family. Part of the 30S ribosomal subunit. Contacts proteins S5 and S12.

In terms of biological role, one of the primary rRNA binding proteins, it binds directly to 16S rRNA central domain where it helps coordinate assembly of the platform of the 30S subunit. The chain is Small ribosomal subunit protein uS8 from Leptospira biflexa serovar Patoc (strain Patoc 1 / Ames).